The sequence spans 310 residues: MMKIVFMGTPEFAVPSLERLIKEFGVKAVFTQPDRPKGRGKKLSISPIKEVALRENIKILQPQKLRDDREAIEFLKKLSPDFIIVVAYGQILSKEILDIPKYGCINLHASLLPKYRGAAPINWAIINGEKFSGNTTMFMDVGLDTGDMLLKDEFKIEDNTTAGELHNKLMESGGELLVKTINGLVEDSIEPEKQKDEESCYASMLDKKMAKINWNLESEDIKNLIKGLNPWPLAYTYYKGTMMKIYEAEIIDKKEDFSPGFIIDVSKGGIKVATKDGILLLKKIQFPSKKPMYVEEYIRGNKIEKGIILE.

110–113 is a binding site for (6S)-5,6,7,8-tetrahydrofolate; sequence SLLP.

The protein belongs to the Fmt family.

It catalyses the reaction L-methionyl-tRNA(fMet) + (6R)-10-formyltetrahydrofolate = N-formyl-L-methionyl-tRNA(fMet) + (6S)-5,6,7,8-tetrahydrofolate + H(+). Functionally, attaches a formyl group to the free amino group of methionyl-tRNA(fMet). The formyl group appears to play a dual role in the initiator identity of N-formylmethionyl-tRNA by promoting its recognition by IF2 and preventing the misappropriation of this tRNA by the elongation apparatus. The chain is Methionyl-tRNA formyltransferase from Clostridium tetani (strain Massachusetts / E88).